The sequence spans 805 residues: RFX-like transcription factor daf-19 (805 aa).

A compositionally biased stretch (polar residues) spans 1–14 (MTNEEPVPSTSSVL). Residues 1–113 (MTNEEPVPST…TPRKKMEPED (113 aa)) are disordered. The span at 19–92 (KNVKIETPSR…DSKSLSKETH (74 aa)) shows a compositional bias: basic and acidic residues. A compositionally biased stretch (polar residues) spans 93–104 (NTISTRSSSSGT). The RFX-type winged-helix DNA-binding region spans 260–334 (TVNWLFENYE…YHYYGIRLKD (75 aa)).

The protein belongs to the RFX family. Ciliated sensory neurons. In terms of tissue distribution, expressed in the male tail HOB and RnB neurons but not in male-specific CEM head neurons or other ciliated neurons.

It localises to the nucleus. Probable transcription factor. May regulate some genes of ciliated sensory neurons. May activate the expression of the shared components of sensory cilia, but not the cell-type-specific expression. Together with transcription factor atf-7, involved in regulation of the serotonergic response of ADF neurons to pathogenic food. Functionally, involved in male mating behavior; may play a role in functional specialization of PKD ciliated sensory neurons. In Caenorhabditis elegans, this protein is RFX-like transcription factor daf-19.